Consider the following 438-residue polypeptide: Argininosuccinate lyase (438 aa).

Belongs to the lyase 1 family. Argininosuccinate lyase subfamily.

The protein localises to the cytoplasm. It catalyses the reaction 2-(N(omega)-L-arginino)succinate = fumarate + L-arginine. It functions in the pathway amino-acid biosynthesis; L-arginine biosynthesis; L-arginine from L-ornithine and carbamoyl phosphate: step 3/3. In Clostridioides difficile (strain 630) (Peptoclostridium difficile), this protein is Argininosuccinate lyase.